Reading from the N-terminus, the 496-residue chain is Angiopoietin-2 (496 aa).

The first 18 residues, 1–18 (MWQIVFFTLSCDLVLAAA), serve as a signal peptide directing secretion. Residues Asn-89, Asn-119, Asn-133, Asn-151, Asn-240, and Asn-304 are each glycosylated (N-linked (GlcNAc...) asparagine). A coiled-coil region spans residues 166–248 (STNKLEKQIL…VNNSVLQKQQ (83 aa)). The 221-residue stretch at 275–495 (KEEQISFRDC…ATTMMIRPAD (221 aa)) folds into the Fibrinogen C-terminal domain. Cysteines 284 and 313 form a disulfide. Ca(2+) contacts are provided by Asp-429, Asp-431, Cys-433, and Cys-435. 2 disulfide bridges follow: Cys-433–Cys-435 and Cys-437–Cys-450.

In terms of assembly, interacts with TEK/TIE2, competing for the same binding site as ANGPT1. Interacts with ITGA5. Interacts with SVEP1/polydom. Interacts with THBD; this interaction significantly inhibits the generation of activated PC and TAFIa/CPB2 by the thrombin/thrombomodulin complex.

It is found in the secreted. Binds to TEK/TIE2, competing for the ANGPT1 binding site, and modulating ANGPT1 signaling. Can induce tyrosine phosphorylation of TEK/TIE2 in the absence of ANGPT1. In the absence of angiogenic inducers, such as VEGF, ANGPT2-mediated loosening of cell-matrix contacts may induce endothelial cell apoptosis with consequent vascular regression. In concert with VEGF, it may facilitate endothelial cell migration and proliferation, thus serving as a permissive angiogenic signal. Involved in the regulation of lymphangiogenesis. The sequence is that of Angiopoietin-2 (ANGPT2) from Homo sapiens (Human).